The following is a 1107-amino-acid chain: Membrane-associated guanylate kinase, WW and PDZ domain-containing protein 3 (1107 aa).

Residues 17-102 (ECGLSGVGGD…PIRLKTVKPG (86 aa)) form the PDZ 1 domain. Residues 110–284 (RHYLSLQFQK…SMDFRNYLTR (175 aa)) enclose the Guanylate kinase-like domain. 117–124 (FQKGSIDH) lines the ATP pocket. Residues 210-277 (FDTETQRKRT…SYNQTNSSMD (68 aa)) form a disordered region. Positions 220-231 (TSVSKMQRTDSS) are enriched in polar residues. Acidic residues predominate over residues 232–241 (LPEEEDEEER). The segment covering 251–261 (TDHRDRQEPSE) has biased composition (basic and acidic residues). The span at 267–277 (PSYNQTNSSMD) shows a compositional bias: polar residues. WW domains are found at residues 289–322 (EPLP…DPRL) and 335–368 (GELP…NPVL). The segment at 374–398 (KQLNPAPSEGTVHQEPENSQFTRDP) is disordered. PDZ domains follow at residues 407-489 (HTSL…TLCR), 577-653 (TIPL…LILR), 727-809 (DVFL…TVRR), and 853-940 (DVIL…IAEE). Residues 941–975 (EHRGPPSGSNSARQSPAPQHRPMGQTQPTYGTLDR) form a disordered region. Residues 947–957 (SGSNSARQSPA) are compositionally biased toward polar residues. In terms of domain architecture, PDZ 6 spans 1003-1085 (PVELERGPRG…KVLLLLRPGT (83 aa)).

Belongs to the MAGUK family.

It localises to the cell membrane. It is found in the cell junction. The protein localises to the tight junction. In terms of biological role, acts as a scaffolding protein at cell-cell junctions, thereby regulating various cellular and signaling processes. The polypeptide is Membrane-associated guanylate kinase, WW and PDZ domain-containing protein 3 (magi3) (Xenopus tropicalis (Western clawed frog)).